The chain runs to 334 residues: G2/mitotic-specific cyclin-1 (334 aa).

This sequence belongs to the cyclin family. Cyclin AB subfamily.

Essential for the control of the cell cycle at the G2/M (mitosis) transition. The chain is G2/mitotic-specific cyclin-1 (CYC1) from Trypanosoma brucei brucei.